The primary structure comprises 1612 residues: Phospholipid-transporting ATPase DNF2 (1612 aa).

The disordered stretch occupies residues 1 to 74 (MSSPSKPTSP…MKDISTPDLS (74 aa)). Topologically, residues 1–252 (MSSPSKPTSP…TFFPKNILFQ (252 aa)) are cytoplasmic. Positions 20–30 (GSASNGLSSMS) are enriched in low complexity. Phosphothreonine is present on Thr-70. Residue Ser-85 is modified to Phosphoserine. The helical transmembrane segment at 253 to 273 (FHNFANIYFLILLILGAFQIF) threads the bilayer. The interval 272–279 (IFGVTNPG) is involved in phosphatidylcholine substrate selection. Over 274-277 (GVTN) the chain is Extracellular. The chain crosses the membrane as a helical span at residues 278–298 (PGFASVPLIVIVIITAIKDGI). The Cytoplasmic segment spans residues 299-598 (EDSRRTVLDL…RISRELNFSV (300 aa)). The segment covering 364-373 (KLQKKREELR) has biased composition (basic and acidic residues). Residues 364-384 (KLQKKREELRRKRNSRSFGPR) are disordered. Phosphoserine is present on residues Ser-389, Ser-392, Ser-396, and Ser-403. Residue Tyr-406 is modified to Phosphotyrosine. A helical membrane pass occupies residues 599-619 (ILNFVLLFILCFTAGIVNGVY). Topologically, residues 620-639 (YKQKPRSRDYFEFGTIGGSA) are extracellular. The involved in phosphatidylcholine substrate selection stretch occupies residues 631-635 (EFGTI). Residues 640–660 (STNGFVSFWVAVILYQSLVPI) traverse the membrane as a helical segment. Over 661 to 1231 (SLYISVEIIK…WCYKRLAEMI (571 aa)) the chain is Cytoplasmic. The 4-aspartylphosphate intermediate role is filled by Asp-712. Asp-712, Lys-713, and Thr-714 together coordinate ATP. Asp-712 is a binding site for Mg(2+). Thr-714 lines the Mg(2+) pocket. Thr-782 carries the post-translational modification Phosphothreonine. 5 residues coordinate ATP: Glu-846, Phe-887, Ser-889, Lys-892, and Lys-916. Lys-938 participates in a covalent cross-link: Glycyl lysine isopeptide (Lys-Gly) (interchain with G-Cter in ubiquitin). Residues Arg-952, Thr-953, Thr-1032, Gly-1033, Asp-1034, Arg-1147, and Lys-1153 each contribute to the ATP site. Mg(2+) is bound at residue Asp-1173. ATP is bound by residues Asn-1176 and Asp-1177. Asp-1177 lines the Mg(2+) pocket. A helical membrane pass occupies residues 1232-1252 (PQFFYKNVIFTLSLFWYGIYN). The Extracellular portion of the chain corresponds to 1253 to 1262 (NFDGSYLFEY). The chain crosses the membrane as a helical span at residues 1263-1283 (TYLTFYNLAFTSVPVILLAVL). Topologically, residues 1284-1313 (DQDVSDTVSMLVPQLYRVGILRKEWNQTKF) are cytoplasmic. A helical transmembrane segment spans residues 1314–1334 (LWYMLDGVYQSVICFFFPYLA). Topologically, residues 1335-1350 (YHKNMVVTENGLGLDH) are extracellular. A helical transmembrane segment spans residues 1351 to 1371 (RYFVGVFVTAIAVTSCNFYVF). Over 1372 to 1377 (MEQYRW) the chain is Cytoplasmic. A helical membrane pass occupies residues 1378 to 1398 (DWFCGLFICLSLAVFYGWTGI). The Extracellular portion of the chain corresponds to 1399–1418 (WTSSSSSNEFYKGAARVFAQ). The chain crosses the membrane as a helical span at residues 1419 to 1439 (PAYWAVLFVGVLFCLLPRFTI). Arg-1436 provides a ligand contact to a 1,2-diacyl-sn-glycero-3-phospho-L-serine. The Cytoplasmic segment spans residues 1440–1612 (DCIRKIFYPK…TLLSQRSRDR (173 aa)). Ser-1542 is subject to Phosphoserine. The tract at residues 1544–1563 (VTTTNNLPRRSMASARGNKL) is disordered. Position 1592 is a phosphoserine (Ser-1592).

The protein belongs to the cation transport ATPase (P-type) (TC 3.A.3) family. Type IV subfamily. As to quaternary structure, component of a flippase complex consisting of DNF1 and LEM3. Interacts with LEM3; the interaction is direct. Mg(2+) serves as cofactor. Post-translationally, phosphorylated by FPK1 and KIN82.

The protein resides in the cell membrane. It carries out the reaction ATP + H2O + phospholipidSide 1 = ADP + phosphate + phospholipidSide 2.. It catalyses the reaction a 1,2-diacyl-sn-glycero-3-phosphoethanolamine(out) + ATP + H2O = a 1,2-diacyl-sn-glycero-3-phosphoethanolamine(in) + ADP + phosphate + H(+). The catalysed reaction is a 1,2-diacyl-sn-glycero-3-phosphocholine(out) + ATP + H2O = a 1,2-diacyl-sn-glycero-3-phosphocholine(in) + ADP + phosphate + H(+). The enzyme catalyses a beta-D-glucosyl-(1&lt;-&gt;1')-N-acylsphing-4-enine(out) + ATP + H2O = a beta-D-glucosyl-(1&lt;-&gt;1')-N-acylsphing-4-enine(in) + ADP + phosphate + H(+). It carries out the reaction a 1,2-diacyl-sn-glycero-3-phospho-L-serine(out) + ATP + H2O = a 1,2-diacyl-sn-glycero-3-phospho-L-serine(in) + ADP + phosphate + H(+). Its activity is regulated as follows. Phosphatidylcholine flippase activity is inhibited by glucosylsphingosine, lactosylsphingosine, lysophosphatidylcholine and to a lesser degree sphingosine-1-phosphate and lysosphingomyelin. Glucosylceramide flippase activity is inhibited by lysophosphatidylcholine, glucosylsphingosine and to a lesser degree lactosylsphingosine whereas lysosphingomyelin has a stimulatory effect at low concentrations. In terms of biological role, catalytic component of a P4-ATPase flippase complex which catalyzes the hydrolysis of ATP coupled to the transport of glucosylceramide, phosphatidylcholine, phosphatidylethanolamine, and small amounts of phosphatidylserine from the lumenal to the cytosolic leaflet of the cell membrane and ensures the maintenance of asymmetric distribution of phospholipids. Does not appear to transport sphingomyelin, inositol phosphoceramide or phosphatidic acid. Required for efficient endocytosis. Required for protein transport from Golgi to vacuoles. This is Phospholipid-transporting ATPase DNF2 (DNF2) from Saccharomyces cerevisiae (strain ATCC 204508 / S288c) (Baker's yeast).